A 277-amino-acid polypeptide reads, in one-letter code: tRNA uridine(34) hydroxylase (277 aa).

The Rhodanese domain maps to 126-221 (SSPDVHVIDT…YLETVRGDDS (96 aa)). C181 acts as the Cysteine persulfide intermediate in catalysis.

This sequence belongs to the TrhO family.

The catalysed reaction is uridine(34) in tRNA + AH2 + O2 = 5-hydroxyuridine(34) in tRNA + A + H2O. In terms of biological role, catalyzes oxygen-dependent 5-hydroxyuridine (ho5U) modification at position 34 in tRNAs. The sequence is that of tRNA uridine(34) hydroxylase from Anaplasma marginale (strain Florida).